The sequence spans 71 residues: Large ribosomal subunit protein uL29 (71 aa).

The protein belongs to the universal ribosomal protein uL29 family.

The polypeptide is Large ribosomal subunit protein uL29 (Rickettsia akari (strain Hartford)).